We begin with the raw amino-acid sequence, 539 residues long: Phosphoenolpyruvate carboxykinase (ATP) (539 aa).

Residues arginine 61, tyrosine 195, and lysine 201 each coordinate substrate. Residues lysine 201, histidine 220, and 238-246 (GLSGTGKTT) each bind ATP. Residues lysine 201 and histidine 220 each contribute to the Mn(2+) site. Aspartate 259 contacts Mn(2+). Positions 287, 325, and 450 each coordinate ATP. Arginine 325 contacts substrate.

This sequence belongs to the phosphoenolpyruvate carboxykinase (ATP) family. Mn(2+) serves as cofactor.

The protein resides in the cytoplasm. It carries out the reaction oxaloacetate + ATP = phosphoenolpyruvate + ADP + CO2. Its pathway is carbohydrate biosynthesis; gluconeogenesis. Involved in the gluconeogenesis. Catalyzes the conversion of oxaloacetate (OAA) to phosphoenolpyruvate (PEP) through direct phosphoryl transfer between the nucleoside triphosphate and OAA. The protein is Phosphoenolpyruvate carboxykinase (ATP) of Methylorubrum extorquens (strain CM4 / NCIMB 13688) (Methylobacterium extorquens).